A 161-amino-acid chain; its full sequence is Nucleotide-binding protein Gbem_0619 (161 aa).

The protein belongs to the YajQ family.

Functionally, nucleotide-binding protein. The protein is Nucleotide-binding protein Gbem_0619 of Citrifermentans bemidjiense (strain ATCC BAA-1014 / DSM 16622 / JCM 12645 / Bem) (Geobacter bemidjiensis).